The chain runs to 47 residues: Delta-halcutoxin-Hcg1a (47 aa).

3 disulfides stabilise this stretch: C3–C43, C5–C33, and C26–C44.

This sequence belongs to the sea anemone sodium channel inhibitory toxin family. Type II subfamily.

The protein resides in the secreted. It is found in the nematocyst. Is potently lethal to crabs, although it showed neither lethal activity in mice nor hemolytic activity. May bind to voltage-gated sodium channels (Nav), thereby delaying their inactivation during signal transduction. The protein is Delta-halcutoxin-Hcg1a of Isohalcurias carlgreni (Sea anemone).